Reading from the N-terminus, the 1390-residue chain is DNA-directed RNA polymerase subunit beta' (1390 aa).

Zn(2+)-binding residues include C70, C72, C85, and C88. Mg(2+)-binding residues include D460, D462, and D464. C814, C888, C895, and C898 together coordinate Zn(2+).

It belongs to the RNA polymerase beta' chain family. As to quaternary structure, the RNAP catalytic core consists of 2 alpha, 1 beta, 1 beta' and 1 omega subunit. When a sigma factor is associated with the core the holoenzyme is formed, which can initiate transcription. Mg(2+) is required as a cofactor. Requires Zn(2+) as cofactor.

It catalyses the reaction RNA(n) + a ribonucleoside 5'-triphosphate = RNA(n+1) + diphosphate. Functionally, DNA-dependent RNA polymerase catalyzes the transcription of DNA into RNA using the four ribonucleoside triphosphates as substrates. The sequence is that of DNA-directed RNA polymerase subunit beta' from Pseudoalteromonas translucida (strain TAC 125).